A 412-amino-acid polypeptide reads, in one-letter code: 8-amino-7-oxononanoate synthase (412 aa).

Residue 106-107 participates in pyridoxal 5'-phosphate binding; it reads GY. His131 serves as a coordination point for substrate. 3 residues coordinate pyridoxal 5'-phosphate: Ser187, His219, and Thr247. Residue Lys250 is modified to N6-(pyridoxal phosphate)lysine. Substrate is bound at residue Thr370.

The protein belongs to the class-II pyridoxal-phosphate-dependent aminotransferase family. BioF subfamily. As to quaternary structure, homodimer. It depends on pyridoxal 5'-phosphate as a cofactor.

The catalysed reaction is 6-carboxyhexanoyl-[ACP] + L-alanine + H(+) = (8S)-8-amino-7-oxononanoate + holo-[ACP] + CO2. It participates in cofactor biosynthesis; biotin biosynthesis. 8-amino-7-oxononanoate synthase; part of the cluster involved in the biosynthesis of biotin (also known as vitamin B8 or vitamin H), a water-soluble vitamin that functions as a prosthetic group of many carboxylases, such as acetyl-CoA carboxylase and pyruvate carboxylase. Catalyzes the decarboxylative condensation of pimeloyl-[acyl-carrier protein] and L-alanine to produce 8-amino-7-oxononanoate (AON). This chain is 8-amino-7-oxononanoate synthase, found in Emericella nidulans (strain FGSC A4 / ATCC 38163 / CBS 112.46 / NRRL 194 / M139) (Aspergillus nidulans).